Reading from the N-terminus, the 321-residue chain is Torsin-2A (321 aa).

A signal peptide spans 1-26; the sequence is MAAATRGCRPWGSLLGLLGLVSAAAA. 93-100 serves as a coordination point for ATP; it reads GWTGTGKS. A glycan (N-linked (GlcNAc...) asparagine) is linked at Asn-149.

This sequence belongs to the ClpA/ClpB family. Torsin subfamily. Homohexamer. Interacts with TOR1AIP1. Isoform 1 is expressed ubiquitously, except in cardiac and endothelial tissues.

Its subcellular location is the endoplasmic reticulum lumen. The polypeptide is Torsin-2A (TOR2A) (Homo sapiens (Human)).